The chain runs to 490 residues: GTPase Der (490 aa).

EngA-type G domains lie at 3-166 (PVVA…MDDV) and 203-376 (IKLA…DSST). GTP contacts are provided by residues 9 to 16 (GRPNVGKS), 56 to 60 (DTGGI), 118 to 121 (NKTD), 209 to 216 (GRPNVGKS), 256 to 260 (DTAGV), and 321 to 324 (NKWD). The KH-like domain maps to 377-461 (RRVSTAMLTR…PIRIQFKEGE (85 aa)).

The protein belongs to the TRAFAC class TrmE-Era-EngA-EngB-Septin-like GTPase superfamily. EngA (Der) GTPase family. Associates with the 50S ribosomal subunit.

Its function is as follows. GTPase that plays an essential role in the late steps of ribosome biogenesis. The sequence is that of GTPase Der from Salmonella enteritidis PT4 (strain P125109).